Consider the following 327-residue polypeptide: Malate dehydrogenase (327 aa).

12-18 (GAAGQIC) lines the NAD(+) pocket. Residues Arg-92 and Arg-98 each coordinate substrate. NAD(+)-binding positions include Asn-105, Gln-112, and 129-131 (TGN). Substrate-binding residues include Asn-131 and Arg-162. Catalysis depends on His-187, which acts as the Proton acceptor.

This sequence belongs to the LDH/MDH superfamily. MDH type 2 family.

It carries out the reaction (S)-malate + NAD(+) = oxaloacetate + NADH + H(+). Catalyzes the reversible oxidation of malate to oxaloacetate. The sequence is that of Malate dehydrogenase from Cutibacterium acnes (strain DSM 16379 / KPA171202) (Propionibacterium acnes).